The sequence spans 214 residues: Phosphopantothenoylcysteine decarboxylase HAL3 (214 aa).

FMN-binding positions include 30–32 (GSV) and 55–57 (TRA). His92 acts as the Proton donor in catalysis. FMN-binding positions include 108–111 (SANT) and Ala142. Residues Asn144, Arg174, and Ala176 each contribute to the N-[(R)-4-phosphopantothenoyl]-L-cysteine site. Cys177 functions as the Proton donor in the catalytic mechanism. Met185 is an N-[(R)-4-phosphopantothenoyl]-L-cysteine binding site.

Belongs to the HFCD (homooligomeric flavin containing Cys decarboxylase) superfamily. In terms of assembly, homotrimer. The cofactor is FMN. Mainly expressed in stems, to a lower extent in flowers, leaves and fruits, and at basal levels in roots.

It localises to the cell membrane. Its subcellular location is the cytoplasm. The catalysed reaction is N-[(R)-4-phosphopantothenoyl]-L-cysteine + H(+) = (R)-4'-phosphopantetheine + CO2. Its pathway is cofactor biosynthesis; coenzyme A biosynthesis; CoA from (R)-pantothenate: step 3/5. In terms of biological role, involved in plant growth, and promotes salt and osmotic tolerance, probably via coenzyme A (CoA) accumulation and endogenous proline accumulation. Catalyzes the decarboxylation of 4'-phosphopantothenoylcysteine to 4'-phosphopantetheine, a key step in coenzyme A biosynthesis. Required for roots development. The polypeptide is Phosphopantothenoylcysteine decarboxylase HAL3 (Malus domestica (Apple)).